Here is a 237-residue protein sequence, read N- to C-terminus: Necrosis-inducing protein NPP1 (237 aa).

A signal peptide spans 1 to 19 (MNVLTFLIAAAVSLAVVQA). The N-linked (GlcNAc...) asparagine glycan is linked to asparagine 67. The short motif at 103–113 (AIMYSWYFPKD) is the Conserved undecapeptide motif element. The Conserved heptapetpide motif signature appears at 120–126 (GHRHDWE).

The protein belongs to the Necrosis inducing protein (NPP1) family.

It localises to the secreted. Functionally, secreted effector that acts as a pathogen-associated molecular pattern (PAMP) recognized by the plant immune system. Induces necrotic cell death and ethylene biosynthesis in parsley. Stimulates early induced host cellular responses implicated in elicitor signal transmission such as increased levels of cytoplasmic calcium, production of reactive oxygen species (ROS), and MAP kinase activation. Infiltration of NPP1 into leaves of Arabidopsis thaliana results in transcript accumulation of pathogenesis-related (PR) genes, production of ROS and ethylene, callose apposition, and hypersensitive response (HR)-like cell death. NPP1-mediated induction of the PR1 gene is salicylic acid-dependent, and requires both functional NDR1 and PAD4. This Phytophthora nicotianae (Potato buckeye rot agent) protein is Necrosis-inducing protein NPP1.